Here is a 482-residue protein sequence, read N- to C-terminus: tRNA sulfurtransferase (482 aa).

The THUMP domain occupies 61 to 165 (DVTLAVLTQT…NDKLNLIIAR (105 aa)). ATP-binding positions include 183–184 (LI), lysine 265, glycine 287, and glutamine 296. The cysteines at positions 344 and 456 are disulfide-linked. Residues 404–482 (LGSDVVVLDI…GYKNVKVYRP (79 aa)) form the Rhodanese domain. Residue cysteine 456 is the Cysteine persulfide intermediate of the active site.

The protein belongs to the ThiI family.

The protein localises to the cytoplasm. It catalyses the reaction [ThiI sulfur-carrier protein]-S-sulfanyl-L-cysteine + a uridine in tRNA + 2 reduced [2Fe-2S]-[ferredoxin] + ATP + H(+) = [ThiI sulfur-carrier protein]-L-cysteine + a 4-thiouridine in tRNA + 2 oxidized [2Fe-2S]-[ferredoxin] + AMP + diphosphate. It carries out the reaction [ThiS sulfur-carrier protein]-C-terminal Gly-Gly-AMP + S-sulfanyl-L-cysteinyl-[cysteine desulfurase] + AH2 = [ThiS sulfur-carrier protein]-C-terminal-Gly-aminoethanethioate + L-cysteinyl-[cysteine desulfurase] + A + AMP + 2 H(+). It participates in cofactor biosynthesis; thiamine diphosphate biosynthesis. Its function is as follows. Catalyzes the ATP-dependent transfer of a sulfur to tRNA to produce 4-thiouridine in position 8 of tRNAs, which functions as a near-UV photosensor. Also catalyzes the transfer of sulfur to the sulfur carrier protein ThiS, forming ThiS-thiocarboxylate. This is a step in the synthesis of thiazole, in the thiamine biosynthesis pathway. The sulfur is donated as persulfide by IscS. The polypeptide is tRNA sulfurtransferase (Aliivibrio fischeri (strain ATCC 700601 / ES114) (Vibrio fischeri)).